A 250-amino-acid chain; its full sequence is Aminoglycoside 3'-phosphotransferase (250 aa).

The active-site Proton acceptor is Asp178.

Belongs to the aminoglycoside phosphotransferase family.

The enzyme catalyses kanamycin A + ATP = kanamycin 3'-phosphate + ADP + H(+). Its function is as follows. Resistance to kanamycin and structurally-related aminoglycosides, including amikacin. This chain is Aminoglycoside 3'-phosphotransferase (aphA-7), found in Campylobacter jejuni.